A 501-amino-acid polypeptide reads, in one-letter code: Cytochrome P450 71B25 (501 aa).

Residues 1 to 21 form a helical membrane-spanning segment; sequence MAILQSFLLLLSLPFLFTLIY. Heme is bound at residue Cys-445.

It belongs to the cytochrome P450 family. Heme serves as cofactor.

The protein localises to the membrane. In Arabidopsis thaliana (Mouse-ear cress), this protein is Cytochrome P450 71B25 (CYP71B25).